A 462-amino-acid polypeptide reads, in one-letter code: GTPase Der (462 aa).

EngA-type G domains are found at residues Pro-3–Met-166 and Ile-175–Ile-348. Residues Gly-9–Ser-16, Asp-56–Ile-60, Asn-118–Asp-121, Gly-181–Ser-188, Asp-228–Val-232, and Asn-293–Asp-296 contribute to the GTP site. Positions Gln-349–Gln-433 constitute a KH-like domain.

This sequence belongs to the TRAFAC class TrmE-Era-EngA-EngB-Septin-like GTPase superfamily. EngA (Der) GTPase family. Associates with the 50S ribosomal subunit.

GTPase that plays an essential role in the late steps of ribosome biogenesis. The protein is GTPase Der of Legionella pneumophila (strain Lens).